Here is a 473-residue protein sequence, read N- to C-terminus: MRALVLLGCLLASLLFSGQAEETEDANEEAPLRDRSHIEKTLMLNEDKPSDDYSAVLQRLRKIYHSSIKPLEQSYKYNELRQHEITDGEITSKPMVLFLGPWSVGKSTMINYLLGLENTRYQLYTGAEPTTSEFTVLMHGPKLKTIEGIVMAADSARSFSPLEKFGQNFLEKLIGIEVPHKLLERVTFVDTPGIIENRKQQERGYPFNDVCQWFIDRADLIFVVFDPTKLDVGLELEMLFRQLKGRESQIRIILNKADNLATQMLMRVYGALFWSLAPLINVTEPPRVYVSSFWPQEYKPDTHQELFLQEEISLLEDLNQVIENRLENKIAFIRQHAIRVRIHALLVDRYLQTYKDKMTFFSDGELVFKDIVEDPDKFYIFKTILAKTNVSKFDLPNREAYKDFFGINPISSFKLLSQQCSYMGGCFLEKIERAITQELPGLLGSLGLGKNPGALNCDKTGCSETPKNRYRKH.

The N-terminal stretch at 1–20 (MRALVLLGCLLASLLFSGQA) is a signal peptide. The region spanning 90 to 331 (ITSKPMVLFL…IENRLENKIA (242 aa)) is the Dynamin-type G domain. The segment at 100–107 (GPWSVGKS) is G1 motif. The tract at residues 128–129 (EP) is G2 motif. The interval 190 to 193 (DTPG) is G3 motif. The G4 motif stretch occupies residues 255-258 (NKAD). Pro278 is a region of interest (G5 motif). 2 N-linked (GlcNAc...) asparagine glycosylation sites follow: Asn281 and Asn389.

It belongs to the TRAFAC class dynamin-like GTPase superfamily. Dynamin/Fzo/YdjA family. In terms of processing, N-glycosylated.

Its subcellular location is the sarcoplasmic reticulum lumen. The protein localises to the sarcoplasmic reticulum membrane. This Homo sapiens (Human) protein is Sarcalumenin (SRL).